The following is a 431-amino-acid chain: Forkhead box protein N2 (431 aa).

The fork-head DNA-binding region spans 112–208 (KPPYSFSLLI…QALKKQPFSS (97 aa)). Residues 364 to 387 (DSGYASQPCAKISEKGQSGKKMRK) are disordered.

It localises to the nucleus. Binds to the purine-rich region in HTLV-I LTR. The chain is Forkhead box protein N2 (FOXN2) from Homo sapiens (Human).